We begin with the raw amino-acid sequence, 309 residues long: MAAQVRVLRQRIRTAKSMKKITKAMELVATSRIAKAQDQVAASLPYARAITEVLTALASNARIDHPLLTPRERVRRAGVLLITSDRGLAGGYSTNAIKTAESLLARLRADGKEPALYVIGRKGVQFYRFRNRPIAASWTGFSEQPTFADAREVGQTLIKVFTAGVDDADGDPGPDGVFGVDELHIVSTEFKSLMTQRPVAKILGPMQVEDRPRAEGLLPAYEFEPEAEALLDALLPKYINTRIYAALVESAASESASRRRAMKSANDNAVEMIEKYTREMNSARQAGITQEISEIVGGANALAASGSEV.

Belongs to the ATPase gamma chain family. In terms of assembly, F-type ATPases have 2 components, CF(1) - the catalytic core - and CF(0) - the membrane proton channel. CF(1) has five subunits: alpha(3), beta(3), gamma(1), delta(1), epsilon(1). CF(0) has three main subunits: a, b and c.

It localises to the cell membrane. Its function is as follows. Produces ATP from ADP in the presence of a proton gradient across the membrane. The gamma chain is believed to be important in regulating ATPase activity and the flow of protons through the CF(0) complex. In Salinispora arenicola (strain CNS-205), this protein is ATP synthase gamma chain.